We begin with the raw amino-acid sequence, 219 residues long: 2-hydroxy-3-keto-5-methylthiopentenyl-1-phosphate phosphatase (219 aa).

It belongs to the HAD-like hydrolase superfamily. MtnX family.

The enzyme catalyses 2-hydroxy-5-methylsulfanyl-3-oxopent-1-enyl phosphate + H2O = 1,2-dihydroxy-5-(methylsulfanyl)pent-1-en-3-one + phosphate. It functions in the pathway amino-acid biosynthesis; L-methionine biosynthesis via salvage pathway; L-methionine from S-methyl-5-thio-alpha-D-ribose 1-phosphate: step 4/6. Dephosphorylates 2-hydroxy-3-keto-5-methylthiopentenyl-1-phosphate (HK-MTPenyl-1-P) yielding 1,2-dihydroxy-3-keto-5-methylthiopentene (DHK-MTPene). This is 2-hydroxy-3-keto-5-methylthiopentenyl-1-phosphate phosphatase from Exiguobacterium sibiricum (strain DSM 17290 / CCUG 55495 / CIP 109462 / JCM 13490 / 255-15).